Here is a 233-residue protein sequence, read N- to C-terminus: Uracil-DNA glycosylase (233 aa).

The active-site Proton acceptor is the aspartate 70.

It belongs to the uracil-DNA glycosylase (UDG) superfamily. UNG family.

The protein localises to the cytoplasm. The enzyme catalyses Hydrolyzes single-stranded DNA or mismatched double-stranded DNA and polynucleotides, releasing free uracil.. In terms of biological role, excises uracil residues from the DNA which can arise as a result of misincorporation of dUMP residues by DNA polymerase or due to deamination of cytosine. The sequence is that of Uracil-DNA glycosylase from Helicobacter pylori (strain HPAG1).